We begin with the raw amino-acid sequence, 480 residues long: Transposase for transposon Tn552 (480 aa).

A DNA-binding region (H-T-H motif) is located at residues 36 to 55 (LSSISKSKGIALSTLYRWNK). Residues 155–341 (ESSRPNEIWQ…TPINRWNSNH (187 aa)) form the Integrase catalytic domain. Residues 438 to 480 (RKHLKQNIASPSTTDLIKEEKSYGYSPQETTKNVKKLKRYRND) are disordered. Over residues 470–480 (NVKKLKRYRND) the composition is skewed to basic residues.

The chain is Transposase for transposon Tn552 from Staphylococcus aureus.